We begin with the raw amino-acid sequence, 81 residues long: Cell division protein ZapB (81 aa).

The stretch at 5–81 (LEVFEKLEAK…QALLGRMEEV (77 aa)) forms a coiled coil. Position 10 is an N6-acetyllysine (Lys10). Residues 36–67 (NNSLSQEVQNAQHQREELERENNHLKEQQNGW) are disordered. Over residues 37–47 (NSLSQEVQNAQ) the composition is skewed to polar residues. A compositionally biased stretch (basic and acidic residues) spans 48 to 62 (HQREELERENNHLKE).

Belongs to the ZapB family. In terms of assembly, homodimer. The ends of the coiled-coil dimer bind to each other, forming polymers. Interacts with FtsZ.

The protein resides in the cytoplasm. Non-essential, abundant cell division factor that is required for proper Z-ring formation. It is recruited early to the divisome by direct interaction with FtsZ, stimulating Z-ring assembly and thereby promoting cell division earlier in the cell cycle. Its recruitment to the Z-ring requires functional FtsA or ZipA. The polypeptide is Cell division protein ZapB (Shigella boydii serotype 4 (strain Sb227)).